A 213-amino-acid chain; its full sequence is Kiwellin (213 aa).

The N-terminal stretch at 1 to 24 (MAQLSLLVLSLFLTLISLPPPGAS) is a signal peptide. Intrachain disulfides connect cysteine 28–cysteine 60, cysteine 32–cysteine 44, and cysteine 38–cysteine 49. 4-hydroxyproline is present on residues proline 65 and proline 67. Cystine bridges form between cysteine 72/cysteine 90, cysteine 80/cysteine 172, cysteine 119/cysteine 144, and cysteine 166/cysteine 182. Residues 91–121 (SPPVTSSTPAKLTNNDFSEGGDGGGPSECDE) are disordered. A compositionally biased stretch (polar residues) spans 93–107 (PVTSSTPAKLTNNDF).

This sequence belongs to the kiwellin family. In terms of processing, undergoes proteolytic cleavage by actinidin to produce kissper and KiTH. Three forms of KiTH are produced by cleavage at different sites.

The protein resides in the secreted. Kissper is an anion-selective pore-forming peptide. This chain is Kiwellin, found in Actinidia chinensis var. chinensis (Chinese soft-hair kiwi).